A 355-amino-acid polypeptide reads, in one-letter code: WAT1-related protein At3g28130 (355 aa).

Transmembrane regions (helical) follow at residues 11-31 (AVLL…NTLF), 42-62 (YTFL…SHIF), 80-100 (IGVL…GIEY), 104-124 (TLAS…AIIF), 136-156 (SVAK…VVLY), 186-206 (WIIG…AFIL), 218-238 (FTVS…IGIV), 244-264 (PSIW…GGIF), 290-310 (LSIL…FYLG), and 311-331 (SLVG…GKAK). Residues 29–154 (TLFKAATSKG…VSLVGALVVV (126 aa)) enclose the EamA domain.

It belongs to the drug/metabolite transporter (DMT) superfamily. Plant drug/metabolite exporter (P-DME) (TC 2.A.7.4) family.

The protein resides in the membrane. The chain is WAT1-related protein At3g28130 from Arabidopsis thaliana (Mouse-ear cress).